An 89-amino-acid polypeptide reads, in one-letter code: Small ribosomal subunit protein uS15 (89 aa).

Residues 1 to 23 (MTLNTEAKQKIINKHQTHGTDTG) are disordered.

The protein belongs to the universal ribosomal protein uS15 family. As to quaternary structure, part of the 30S ribosomal subunit. Forms a bridge to the 50S subunit in the 70S ribosome, contacting the 23S rRNA.

Functionally, one of the primary rRNA binding proteins, it binds directly to 16S rRNA where it helps nucleate assembly of the platform of the 30S subunit by binding and bridging several RNA helices of the 16S rRNA. In terms of biological role, forms an intersubunit bridge (bridge B4) with the 23S rRNA of the 50S subunit in the ribosome. The chain is Small ribosomal subunit protein uS15 from Prochlorococcus marinus (strain SARG / CCMP1375 / SS120).